We begin with the raw amino-acid sequence, 185 residues long: UPF0200 protein Mevan_0592 (185 aa).

ATP is bound at residue G8–S15.

It belongs to the UPF0200 family.

The chain is UPF0200 protein Mevan_0592 from Methanococcus vannielii (strain ATCC 35089 / DSM 1224 / JCM 13029 / OCM 148 / SB).